Here is a 1567-residue protein sequence, read N- to C-terminus: ABC multidrug transporter MDR1 (1567 aa).

Residues 1–11 (MASQPPQPPSG) are compositionally biased toward pro residues. The segment at 1–37 (MASQPPQPPSGQPDTQYEEYQSEVITETTNRPTPAAD) is disordered. Positions 22-32 (SEVITETTNRP) are enriched in polar residues. N-linked (GlcNAc...) asparagine glycans are attached at residues N149, N157, and N356. In terms of domain architecture, ABC transporter 1 spans 167–432 (VQYQDTFLSP…FEEMGWYCPP (266 aa)). Helical transmembrane passes span 543–563 (STIATNISQIMMALIIGSLFF), 571–591 (GFFAKGSVIFFAILLNGLMSI), 636–656 (IPIKFLLALVFNIIIYFLGGL), 661–681 (AKFFIFFLFTFITILTMSAIF), 691–711 (IPQALALAGVMILALVIYTGF), and 798–818 (LGILLGFLAFFYFVYLVVSEL). N-linked (GlcNAc...) asparagine glycosylation is found at N819, N895, and N912. In terms of domain architecture, ABC transporter 2 spans 891–1134 (FTWRNVTYDI…LLNYFETHGA (244 aa)). ATP is bound at residue 927 to 934 (GVSGAGKT). A disordered region spans residues 1172–1202 (ESRHVQQELDRIQSETSKRNEGHGQSAEKEP). The chain crosses the membrane as a helical span at residues 1231-1251 (IWGKLLLGLTSALFIGFSFFL). Residue N1253 is glycosylated (N-linked (GlcNAc...) asparagine). Helical transmembrane passes span 1257 to 1277 (AGLQNSLFSIFMLTTIFSSLV), 1305 to 1325 (VFLLANIIVEIPYQILLGIIA), 1345 to 1365 (ILLLYCVQFFIFASTFAQMII), 1372 to 1392 (ETAGGIATTMFGLMVTFNGVL), and 1498 to 1518 (GIGWAYIVFNIFATVALYYLI).

This sequence belongs to the ABC transporter superfamily. ABCG family. PDR (TC 3.A.1.205) subfamily.

It is found in the cell membrane. The enzyme catalyses voriconazole(in) + ATP + H2O = voriconazole(out) + ADP + phosphate + H(+). It carries out the reaction fluconazole(in) + ATP + H2O = fluconazole(out) + ADP + phosphate + H(+). It catalyses the reaction (R)-miconazole(in) + ATP + H2O = (R)-miconazole(out) + ADP + phosphate + H(+). The catalysed reaction is (S)-miconazole(in) + ATP + H2O = (S)-miconazole(out) + ADP + phosphate + H(+). Functionally, pleiotropic ABC efflux transporter that may be involved in the modulation susceptibility to a wide range of unrelated cytotoxic compounds. This is ABC multidrug transporter MDR1 from Trichophyton equinum (strain ATCC MYA-4606 / CBS 127.97) (Horse ringworm fungus).